A 154-amino-acid polypeptide reads, in one-letter code: SsrA-binding protein (154 aa).

The interval 135–154 (KREDLKRRQDQRDMARAMKR) is disordered.

This sequence belongs to the SmpB family.

It localises to the cytoplasm. In terms of biological role, required for rescue of stalled ribosomes mediated by trans-translation. Binds to transfer-messenger RNA (tmRNA), required for stable association of tmRNA with ribosomes. tmRNA and SmpB together mimic tRNA shape, replacing the anticodon stem-loop with SmpB. tmRNA is encoded by the ssrA gene; the 2 termini fold to resemble tRNA(Ala) and it encodes a 'tag peptide', a short internal open reading frame. During trans-translation Ala-aminoacylated tmRNA acts like a tRNA, entering the A-site of stalled ribosomes, displacing the stalled mRNA. The ribosome then switches to translate the ORF on the tmRNA; the nascent peptide is terminated with the 'tag peptide' encoded by the tmRNA and targeted for degradation. The ribosome is freed to recommence translation, which seems to be the essential function of trans-translation. This Microcystis aeruginosa (strain NIES-843 / IAM M-2473) protein is SsrA-binding protein.